A 225-amino-acid chain; its full sequence is Myelin-associated neurite-outgrowth inhibitor (225 aa).

Residues 1–58 (MNPVYSPGSSGVPYANAKGIGYPAGFPMGYAAAAPAYSPNMYAGPNPAFQQELEHPAH) are Cytoplasmic-facing. Residues 59–75 (VSSGVQMFMFGHAFSVA) form a helical membrane-spanning segment. The Extracellular portion of the chain corresponds to 76 to 173 (RNGAIPSGYT…PAPIQSPRGN (98 aa)). The helical transmembrane segment at 174-193 (GVAMGMVAGTTMAMSAGTLL) threads the bilayer. Residues 194–225 (TSHYPSPVAPQVTMPTYRPPGTPTYSYVPPQW) are Cytoplasmic-facing.

Belongs to the FAM168 family.

The protein localises to the cytoplasm. The protein resides in the perinuclear region. It is found in the cell membrane. It localises to the cell projection. Its subcellular location is the axon. In terms of biological role, inhibitor of neuronal axonal outgrowth. This chain is Myelin-associated neurite-outgrowth inhibitor (fam168b), found in Xenopus laevis (African clawed frog).